We begin with the raw amino-acid sequence, 275 residues long: Tryptophan synthase alpha chain (275 aa).

Catalysis depends on proton acceptor residues glutamate 60 and aspartate 71.

The protein belongs to the TrpA family. Tetramer of two alpha and two beta chains.

It carries out the reaction (1S,2R)-1-C-(indol-3-yl)glycerol 3-phosphate + L-serine = D-glyceraldehyde 3-phosphate + L-tryptophan + H2O. It functions in the pathway amino-acid biosynthesis; L-tryptophan biosynthesis; L-tryptophan from chorismate: step 5/5. Functionally, the alpha subunit is responsible for the aldol cleavage of indoleglycerol phosphate to indole and glyceraldehyde 3-phosphate. The polypeptide is Tryptophan synthase alpha chain (Prochlorococcus marinus (strain MIT 9313)).